Here is a 31-residue protein sequence, read N- to C-terminus: Unknown protein from spot 104 of 2D-PAGE of thylakoid (31 aa).

Its subcellular location is the plastid. The protein localises to the chloroplast thylakoid. The chain is Unknown protein from spot 104 of 2D-PAGE of thylakoid from Pisum sativum (Garden pea).